The chain runs to 291 residues: Meteorin (291 aa).

The first 21 residues, 1–21 (MLVAALLCALCCGLLAASARA), serve as a signal peptide directing secretion. 5 disulfide bridges follow: C28–C49, C80–C116, C169–C240, C172–C264, and C182–C286.

Belongs to the meteorin family. As to quaternary structure, monomer.

It is found in the secreted. Its function is as follows. Involved in both glial cell differentiation and axonal network formation during neurogenesis. Promotes astrocyte differentiation and transforms cerebellar astrocytes into radial glia. Also induces axonal extension in small and intermediate neurons of sensory ganglia by activating nearby satellite glia. This chain is Meteorin (Metrn), found in Rattus norvegicus (Rat).